Here is a 264-residue protein sequence, read N- to C-terminus: Thymidylate synthase (264 aa).

Residue Arg-21 participates in dUMP binding. Position 51 (His-51) interacts with (6R)-5,10-methylene-5,6,7,8-tetrahydrofolate. Residue 126 to 127 coordinates dUMP; it reads RR. The active-site Nucleophile is Cys-146. Residues 166-169, Asn-177, and 207-209 each bind dUMP; these read RSCD and HLY. Asp-169 serves as a coordination point for (6R)-5,10-methylene-5,6,7,8-tetrahydrofolate. Position 263 (Ala-263) interacts with (6R)-5,10-methylene-5,6,7,8-tetrahydrofolate.

It belongs to the thymidylate synthase family. Bacterial-type ThyA subfamily. In terms of assembly, homodimer.

The protein resides in the cytoplasm. The enzyme catalyses dUMP + (6R)-5,10-methylene-5,6,7,8-tetrahydrofolate = 7,8-dihydrofolate + dTMP. It participates in pyrimidine metabolism; dTTP biosynthesis. Catalyzes the reductive methylation of 2'-deoxyuridine-5'-monophosphate (dUMP) to 2'-deoxythymidine-5'-monophosphate (dTMP) while utilizing 5,10-methylenetetrahydrofolate (mTHF) as the methyl donor and reductant in the reaction, yielding dihydrofolate (DHF) as a by-product. This enzymatic reaction provides an intracellular de novo source of dTMP, an essential precursor for DNA biosynthesis. The polypeptide is Thymidylate synthase (Salmonella arizonae (strain ATCC BAA-731 / CDC346-86 / RSK2980)).